The following is a 436-amino-acid chain: Methylenetetrahydrofolate--tRNA-(uracil-5-)-methyltransferase TrmFO (436 aa).

Residue glycine 11–glycine 16 participates in FAD binding.

It belongs to the MnmG family. TrmFO subfamily. The cofactor is FAD.

It is found in the cytoplasm. It carries out the reaction uridine(54) in tRNA + (6R)-5,10-methylene-5,6,7,8-tetrahydrofolate + NADH + H(+) = 5-methyluridine(54) in tRNA + (6S)-5,6,7,8-tetrahydrofolate + NAD(+). The enzyme catalyses uridine(54) in tRNA + (6R)-5,10-methylene-5,6,7,8-tetrahydrofolate + NADPH + H(+) = 5-methyluridine(54) in tRNA + (6S)-5,6,7,8-tetrahydrofolate + NADP(+). Catalyzes the folate-dependent formation of 5-methyl-uridine at position 54 (M-5-U54) in all tRNAs. The protein is Methylenetetrahydrofolate--tRNA-(uracil-5-)-methyltransferase TrmFO of Shouchella clausii (strain KSM-K16) (Alkalihalobacillus clausii).